The sequence spans 284 residues: Plastid-lipid-associated protein 6, chloroplastic (284 aa).

A compositionally biased stretch (low complexity) spans 1 to 11 (MATSSTFSSLL). Positions 1 to 47 (MATSSTFSSLLPSPPALLSDHRSPPPSIRYSFSPLTTPKSSRLGFTV) are disordered. A chloroplast-targeting transit peptide spans 1–72 (MATSSTFSSL…SIGGESDPPP (72 aa)). A phosphoserine mark is found at S96, S105, S148, S151, and S155.

This sequence belongs to the PAP/fibrillin family. In terms of assembly, part of the Photosystem II light-harvesting complex (LHCII). Post-translationally, phosphorylated as part of a basal defense response.

The protein localises to the plastid. It localises to the chloroplast. The protein resides in the plastoglobule. Its function is as follows. Required for plastoglobule development and resistance to multiple stresses. Regulates plastoglobule osmiophilic content. May be involved in the transport of lipophilic antioxidants in and out of the plastoglobule. This chain is Plastid-lipid-associated protein 6, chloroplastic, found in Arabidopsis thaliana (Mouse-ear cress).